A 281-amino-acid chain; its full sequence is Small ribosomal subunit protein uS2 (281 aa).

The tract at residues 233-281 (NKAEGEAAEQPMAAWEKELLTNEAPAEASAEAAAPAAAEGETAEAPKAE) is disordered. A compositionally biased stretch (low complexity) spans 255 to 275 (EAPAEASAEAAAPAAAEGETA).

It belongs to the universal ribosomal protein uS2 family.

In Bifidobacterium longum (strain DJO10A), this protein is Small ribosomal subunit protein uS2.